A 364-amino-acid chain; its full sequence is D-alanine--D-alanine ligase A (364 aa).

The ATP-grasp domain occupies 145 to 348 (KRLLRDAGLN…YTDLISRLIE (204 aa)). Residue 175–230 (ESRLGLPLFVKPANQGSSVGVSKVANEAQYQQAVALAFEFDHKVVVEQGIKGREIE) coordinates ATP. Asp-302, Glu-315, and Asn-317 together coordinate Mg(2+).

This sequence belongs to the D-alanine--D-alanine ligase family. The cofactor is Mg(2+). Requires Mn(2+) as cofactor.

It localises to the cytoplasm. It catalyses the reaction 2 D-alanine + ATP = D-alanyl-D-alanine + ADP + phosphate + H(+). Its pathway is cell wall biogenesis; peptidoglycan biosynthesis. Functionally, cell wall formation. This Salmonella typhi protein is D-alanine--D-alanine ligase A (ddlA).